Reading from the N-terminus, the 278-residue chain is Sulfur carrier protein FdhD (278 aa).

The active-site Cysteine persulfide intermediate is C121. 260–265 is a Mo-bis(molybdopterin guanine dinucleotide) binding site; the sequence is FCKPGR.

It belongs to the FdhD family.

Its subcellular location is the cytoplasm. Its function is as follows. Required for formate dehydrogenase (FDH) activity. Acts as a sulfur carrier protein that transfers sulfur from IscS to the molybdenum cofactor prior to its insertion into FDH. This Salmonella heidelberg (strain SL476) protein is Sulfur carrier protein FdhD.